Consider the following 614-residue polypeptide: Zinc finger protein ztf-7 (614 aa).

Gly residues predominate over residues 1–10 (MSTSGSGGGN). The disordered stretch occupies residues 1–160 (MSTSGSGGGN…SRPKKPEKMS (160 aa)). Residues 18–41 (NVASSPNANPKKNADTESSGGSKN) are compositionally biased toward polar residues. Low complexity predominate over residues 54 to 69 (GSNSRNGSRTNSVSNS). Basic and acidic residues predominate over residues 74-83 (NRKDWTDRKS). Over residues 132–150 (DYSDEYELDEPFSDSDDED) the composition is skewed to acidic residues. 2 C2H2-type zinc fingers span residues 356 to 380 (NECI…KRNH) and 447 to 470 (VVCL…KTTH).

Belongs to the ZNF277 family. In terms of assembly, interacts with rps-2.

The protein localises to the cytoplasm. In terms of biological role, probable transcription factor. Limits the ability to tolerate cold environment or cold-warm stress. In complex with rps-2, mediates the cold-warm shock response by promoting translocation of components of the RNA exosome from the nucleolus to nucleoplasm. This is Zinc finger protein ztf-7 from Caenorhabditis elegans.